The following is a 234-amino-acid chain: Adenosine 5'-phosphosulfate reductase (234 aa).

Residues cysteine 120, cysteine 121, cysteine 203, and cysteine 206 each coordinate [4Fe-4S] cluster. Cysteine 229 functions as the Nucleophile; cysteine thiosulfonate intermediate in the catalytic mechanism.

It belongs to the PAPS reductase family. CysH subfamily. It depends on [4Fe-4S] cluster as a cofactor.

It localises to the cytoplasm. It catalyses the reaction [thioredoxin]-disulfide + sulfite + AMP + 2 H(+) = adenosine 5'-phosphosulfate + [thioredoxin]-dithiol. It functions in the pathway sulfur metabolism; hydrogen sulfide biosynthesis; sulfite from sulfate. Catalyzes the formation of sulfite from adenosine 5'-phosphosulfate (APS) using thioredoxin as an electron donor. This is Adenosine 5'-phosphosulfate reductase from Bacillus cereus (strain Q1).